Consider the following 403-residue polypeptide: DNA polymerase IV (403 aa).

The region spanning 23-203 is the UmuC domain; the sequence is IAHMDCDAFY…KPVNILPGVG (181 aa). Asp27 and Asp120 together coordinate Mg(2+). Glu121 is a catalytic residue.

It belongs to the DNA polymerase type-Y family. Monomer. It depends on Mg(2+) as a cofactor.

The protein localises to the cytoplasm. It catalyses the reaction DNA(n) + a 2'-deoxyribonucleoside 5'-triphosphate = DNA(n+1) + diphosphate. Functionally, poorly processive, error-prone DNA polymerase involved in untargeted mutagenesis. Copies undamaged DNA at stalled replication forks, which arise in vivo from mismatched or misaligned primer ends. These misaligned primers can be extended by PolIV. Exhibits no 3'-5' exonuclease (proofreading) activity. May be involved in translesional synthesis, in conjunction with the beta clamp from PolIII. This is DNA polymerase IV from Caulobacter vibrioides (strain ATCC 19089 / CIP 103742 / CB 15) (Caulobacter crescentus).